A 382-amino-acid chain; its full sequence is Neuropeptide Y receptor type 2 (382 aa).

The segment at 1–39 (MGPIGAEADENQTVEEMKMEPSGPGHTTPRGELAPDSEP) is disordered. The Extracellular portion of the chain corresponds to 1-46 (MGPIGAEADENQTVEEMKMEPSGPGHTTPRGELAPDSEPELKDSTK). A glycan (N-linked (GlcNAc...) asparagine) is linked at Asn11. A helical membrane pass occupies residues 47–67 (LIEVQIILILAYCSIILLGVV). The Cytoplasmic portion of the chain corresponds to 68–87 (GNSLVIHVVIKFKSMRTVTN). The chain crosses the membrane as a helical span at residues 88–108 (FFIANLAVADLLVNTLCLPFT). Over 109 to 125 (LTYTLMGEWKMGPVLCH) the chain is Extracellular. Cys124 and Cys204 are oxidised to a cystine. A helical membrane pass occupies residues 126 to 146 (LVPYAQGLAVQVSTITLTVIA). The Cytoplasmic segment spans residues 147 to 166 (LDRHRCIVYHLESKISKRIS). A helical transmembrane segment spans residues 167–187 (FLIIGLAWGISALLASPLAIF). The Extracellular portion of the chain corresponds to 188–217 (REYSLIEIIPDFEIVACTEKWPGEEKSIYG). A helical membrane pass occupies residues 218–238 (TVYSLSSLLILYVLPLGIISF). Residues 239–269 (SYARIWSKLKNHVSPGGVNDHYHQRRQKTTK) are Cytoplasmic-facing. The helical transmembrane segment at 270-290 (MLVCVVVVFAVSWLPLHAFQL) threads the bilayer. At 291–305 (AVDIDSQVLDLKEYK) the chain is on the extracellular side. A helical transmembrane segment spans residues 306 to 326 (LIFTVFHIIAMCSTFANPLLY). Topologically, residues 327-382 (GWMNSNYRKAFLSAFRCEQRLDAIHSEVSMTSKAKKNLEATKNGGPDDSFTEATNV) are cytoplasmic. Cys343 is lipidated: S-palmitoyl cysteine. The segment at 363-382 (NLEATKNGGPDDSFTEATNV) is disordered.

Belongs to the G-protein coupled receptor 1 family.

It localises to the cell membrane. Receptor for neuropeptide Y and peptide YY. The protein is Neuropeptide Y receptor type 2 (NPY2R) of Sus scrofa (Pig).